A 274-amino-acid chain; its full sequence is Halorhodopsin (274 aa).

Positions 1 to 21 (MSITSVPGVVDAGVLGAQSAA) are excised as a propeptide. The Extracellular portion of the chain corresponds to 22–25 (AVRE). A helical membrane pass occupies residues 26–51 (NALLSSSLWVNVALAGIAILVFVYMG). Over 52 to 57 (RTIRPG) the chain is Cytoplasmic. The chain crosses the membrane as a helical span at residues 58-81 (RPRLIWGATLMIPLVSISSYLGLL). Residues 82-105 (SGLTVGMIEMPAGHALAGEMVRSQ) are Extracellular-facing. Positions 105, 111, and 115 each coordinate chloride. A helical membrane pass occupies residues 106-127 (WGRYLTWALSTPMILLALGLLA). Residues 128-130 (DVD) lie on the Cytoplasmic side of the membrane. Residues 131–154 (LGSLFTVIAADIGMCVTGLAAAMT) form a helical membrane-spanning segment. Residues 155-157 (TSA) are Extracellular-facing. The chain crosses the membrane as a helical span at residues 158–180 (LLFRWAFYAISCAFFVVVLSALV). The Cytoplasmic portion of the chain corresponds to 181 to 192 (TDWAASASSAGT). Residues 193-216 (AEIFDTLRVLTVVLWLGYPIVWAV) traverse the membrane as a helical segment. Residues 217-226 (GVEGLALVQS) lie on the Extracellular side of the membrane. A helical membrane pass occupies residues 227–255 (VGVTSWAYSVLDVFAKYVFAFILLRWVAN). An N6-(retinylidene)lysine modification is found at K242. Residues 256–274 (NERTVAVAGQTLGTMSSDD) lie on the Cytoplasmic side of the membrane.

This sequence belongs to the archaeal/bacterial/fungal opsin family. As to quaternary structure, homotrimer.

The protein localises to the cell membrane. In terms of biological role, light-driven chloride pump. The protein is Halorhodopsin (hop) of Halobacterium salinarum (strain ATCC 29341 / DSM 671 / R1).